The following is a 386-amino-acid chain: DNA replication and repair protein RecF (386 aa).

30 to 37 contacts ATP; that stretch reads GANAQGKT.

Belongs to the RecF family.

The protein localises to the cytoplasm. Its function is as follows. The RecF protein is involved in DNA metabolism; it is required for DNA replication and normal SOS inducibility. RecF binds preferentially to single-stranded, linear DNA. It also seems to bind ATP. This is DNA replication and repair protein RecF from Natranaerobius thermophilus (strain ATCC BAA-1301 / DSM 18059 / JW/NM-WN-LF).